The chain runs to 311 residues: Cytochrome f (311 aa).

An N-terminal signal peptide occupies residues Met1–Ala27. 4 residues coordinate heme: Tyr28, Cys48, Cys51, and His52. Residues Ile277–Lys297 form a helical membrane-spanning segment.

Belongs to the cytochrome f family. As to quaternary structure, the 4 large subunits of the cytochrome b6-f complex are cytochrome b6, subunit IV (17 kDa polypeptide, PetD), cytochrome f and the Rieske protein, while the 4 small subunits are PetG, PetL, PetM and PetN. The complex functions as a dimer. Heme serves as cofactor.

The protein localises to the cellular thylakoid membrane. Its function is as follows. Component of the cytochrome b6-f complex, which mediates electron transfer between photosystem II (PSII) and photosystem I (PSI), cyclic electron flow around PSI, and state transitions. The sequence is that of Cytochrome f from Synechococcus sp. (strain CC9902).